The following is a 305-amino-acid chain: Ribonuclease BN (305 aa).

The Zn(2+) site is built by His-64, His-66, Asp-68, His-69, His-141, Asp-212, and His-270. Catalysis depends on Asp-68, which acts as the Proton acceptor.

This sequence belongs to the RNase Z family. RNase BN subfamily. In terms of assembly, homodimer. Zn(2+) serves as cofactor.

Functionally, zinc phosphodiesterase, which has both exoribonuclease and endoribonuclease activities. The chain is Ribonuclease BN from Escherichia coli O6:K15:H31 (strain 536 / UPEC).